Reading from the N-terminus, the 289-residue chain is Probable endonuclease 4 (289 aa).

H74, H115, E150, D184, H187, H218, D231, H233, and E263 together coordinate Zn(2+).

It belongs to the AP endonuclease 2 family. It depends on Zn(2+) as a cofactor.

It carries out the reaction Endonucleolytic cleavage to 5'-phosphooligonucleotide end-products.. Functionally, endonuclease IV plays a role in DNA repair. It cleaves phosphodiester bonds at apurinic or apyrimidinic (AP) sites, generating a 3'-hydroxyl group and a 5'-terminal sugar phosphate. This is Probable endonuclease 4 from Mycoplasma mycoides subsp. mycoides SC (strain CCUG 32753 / NCTC 10114 / PG1).